Reading from the N-terminus, the 130-residue chain is Iron-sulfur cluster insertion protein ErpA (130 aa).

Positions 46, 116, and 118 each coordinate iron-sulfur cluster.

Belongs to the HesB/IscA family. As to quaternary structure, homodimer. Iron-sulfur cluster is required as a cofactor.

Its function is as follows. Required for insertion of 4Fe-4S clusters for at least IspG. The sequence is that of Iron-sulfur cluster insertion protein ErpA from Legionella pneumophila (strain Lens).